The chain runs to 469 residues: Neuraminidase (469 aa).

The Intravirion portion of the chain corresponds to M1–K6. The helical transmembrane segment at I7 to Q29 threads the bilayer. The interval G11–V33 is involved in apical transport and lipid raft association. Over V30–I469 the chain is Virion surface. The interval H36–S88 is hypervariable stalk region. N61, N70, and N86 each carry an N-linked (GlcNAc...) asparagine; by host glycan. Positions Q91–I469 are head of neuraminidase. 8 disulfide bridges follow: C92-C417, C124-C129, C183-C230, C232-C237, C278-C291, C280-C289, C318-C337, and C421-C447. R118 serves as a coordination point for substrate. N146 is a glycosylation site (N-linked (GlcNAc...) asparagine; by host). D151 acts as the Proton donor/acceptor in catalysis. R152 lines the substrate pocket. N-linked (GlcNAc...) asparagine; by host glycans are attached at residues N200 and N234. Residue E276–E277 coordinates substrate. R292 provides a ligand contact to substrate. Ca(2+) contacts are provided by D293, G297, and D324. Residue R371 participates in substrate binding. N402 carries an N-linked (GlcNAc...) asparagine; by host glycan. Residue Y406 is the Nucleophile of the active site.

The protein belongs to the glycosyl hydrolase 34 family. Homotetramer. Ca(2+) serves as cofactor. Post-translationally, N-glycosylated.

It localises to the virion membrane. The protein resides in the host apical cell membrane. It carries out the reaction Hydrolysis of alpha-(2-&gt;3)-, alpha-(2-&gt;6)-, alpha-(2-&gt;8)- glycosidic linkages of terminal sialic acid residues in oligosaccharides, glycoproteins, glycolipids, colominic acid and synthetic substrates.. With respect to regulation, inhibited by the neuraminidase inhibitors zanamivir (Relenza) and oseltamivir (Tamiflu). These drugs interfere with the release of progeny virus from infected cells and are effective against all influenza strains. Resistance to neuraminidase inhibitors is quite rare. Functionally, catalyzes the removal of terminal sialic acid residues from viral and cellular glycoconjugates. Cleaves off the terminal sialic acids on the glycosylated HA during virus budding to facilitate virus release. Additionally helps virus spread through the circulation by further removing sialic acids from the cell surface. These cleavages prevent self-aggregation and ensure the efficient spread of the progeny virus from cell to cell. Otherwise, infection would be limited to one round of replication. Described as a receptor-destroying enzyme because it cleaves a terminal sialic acid from the cellular receptors. May facilitate viral invasion of the upper airways by cleaving the sialic acid moieties on the mucin of the airway epithelial cells. Likely to plays a role in the budding process through its association with lipid rafts during intracellular transport. May additionally display a raft-association independent effect on budding. Plays a role in the determination of host range restriction on replication and virulence. Sialidase activity in late endosome/lysosome traffic seems to enhance virus replication. The polypeptide is Neuraminidase (Aves (whales)).